A 514-amino-acid polypeptide reads, in one-letter code: Peptide chain release factor 3 (514 aa).

Residues 8 to 268 (KKRRTFAIIS…TFLKFAPEPH (261 aa)) enclose the tr-type G domain. Residues 17-24 (SHPDAGKT), 85-89 (DTPGH), and 139-142 (NKLD) contribute to the GTP site.

It belongs to the TRAFAC class translation factor GTPase superfamily. Classic translation factor GTPase family. PrfC subfamily.

The protein localises to the cytoplasm. Its function is as follows. Increases the formation of ribosomal termination complexes and stimulates activities of RF-1 and RF-2. It binds guanine nucleotides and has strong preference for UGA stop codons. It may interact directly with the ribosome. The stimulation of RF-1 and RF-2 is significantly reduced by GTP and GDP, but not by GMP. The protein is Peptide chain release factor 3 of Streptococcus thermophilus (strain ATCC BAA-491 / LMD-9).